The chain runs to 30 residues: Conopeptide Vi002 (30 aa).

Expressed by the venom gland.

The protein resides in the secreted. This is Conopeptide Vi002 from Conus virgo (Virgin cone).